Reading from the N-terminus, the 53-residue chain is uncharacterized protein (53 aa).

This is an uncharacterized protein from Homo sapiens (Human).